The sequence spans 263 residues: Insulin-like growth factor-binding protein 1 (263 aa).

The first 25 residues, 1 to 25, serve as a signal peptide directing secretion; sequence MPEVLAVRAWPLLLSLAVQLGATVG. Residues 28–109 enclose the IGFBP N-terminal domain; the sequence is QPWRCAPCSA…TRGQGACMTT (82 aa). 6 disulfide bridges follow: cysteine 32/cysteine 59, cysteine 35/cysteine 61, cysteine 43/cysteine 62, cysteine 50/cysteine 65, cysteine 73/cysteine 86, and cysteine 80/cysteine 106. The segment at 102-131 is disordered; sequence GQGACMTTPSDEATDTKDTTSPENVSPESS. A phosphoserine mark is found at serine 122, serine 127, serine 130, serine 148, and serine 160. Residues 122-131 are compositionally biased toward polar residues; that stretch reads SPENVSPESS. Residue tyrosine 162 is modified to Phosphotyrosine. In terms of domain architecture, Thyroglobulin type-1 spans 177–255; sequence KEPCQRELYK…SVAVRGDPKC (79 aa). Disulfide bonds link cysteine 180-cysteine 210, cysteine 221-cysteine 232, and cysteine 234-cysteine 255. Residue serine 246 is modified to Phosphoserine. The Cell attachment site signature appears at 250–252; that stretch reads RGD.

Binds equally well IGF1 and IGF2. Interacts with integrin ITGA5:ITGB1. Interacts with VHL; this interaction inhibits HIF1A degradation.

It localises to the secreted. In terms of biological role, multifunctional protein that plays a critical role in regulating the availability of IGFs such as IGF1 and IGF2 to their receptors and thereby regulates IGF-mediated cellular processes including cell migration, proliferation, differentiation or apoptosis in a cell-type specific manner. Also plays a positive role in cell migration by interacting with integrin ITGA5:ITGB1 through its RGD motif. Mechanistically, binding to integrins leads to activation of focal adhesion kinase/PTK2 and stimulation of the mitogen-activated protein kinase (MAPK) pathway. Regulates cardiomyocyte apoptosis by suppressing HIF-1alpha/HIF1A degradation through ubiquitination. In Bos taurus (Bovine), this protein is Insulin-like growth factor-binding protein 1 (IGFBP1).